Consider the following 267-residue polypeptide: Undecaprenyl-diphosphatase (267 aa).

The next 7 helical transmembrane spans lie at 1 to 21 (MTLF…FLPV), 49 to 69 (VGTL…AVAG), 83 to 103 (AFLA…GLAL), 111 to 131 (ALRS…VLYW), 190 to 210 (MLMS…EVAA), 219 to 239 (DAAI…TLMM), and 245 to 265 (VSFT…LIIA).

The protein belongs to the UppP family.

The protein resides in the cell inner membrane. It carries out the reaction di-trans,octa-cis-undecaprenyl diphosphate + H2O = di-trans,octa-cis-undecaprenyl phosphate + phosphate + H(+). Functionally, catalyzes the dephosphorylation of undecaprenyl diphosphate (UPP). Confers resistance to bacitracin. The sequence is that of Undecaprenyl-diphosphatase from Dinoroseobacter shibae (strain DSM 16493 / NCIMB 14021 / DFL 12).